Here is a 299-residue protein sequence, read N- to C-terminus: 4-hydroxy-3-methylbut-2-enyl diphosphate reductase (299 aa).

Residue Cys12 coordinates [4Fe-4S] cluster. (2E)-4-hydroxy-3-methylbut-2-enyl diphosphate contacts are provided by His42 and His88. Positions 42 and 88 each coordinate dimethylallyl diphosphate. 2 residues coordinate isopentenyl diphosphate: His42 and His88. Residue Cys110 participates in [4Fe-4S] cluster binding. Residue His138 participates in (2E)-4-hydroxy-3-methylbut-2-enyl diphosphate binding. Dimethylallyl diphosphate is bound at residue His138. His138 contributes to the isopentenyl diphosphate binding site. The Proton donor role is filled by Glu140. Thr177 is a (2E)-4-hydroxy-3-methylbut-2-enyl diphosphate binding site. Residue Cys205 coordinates [4Fe-4S] cluster. (2E)-4-hydroxy-3-methylbut-2-enyl diphosphate contacts are provided by Ser233, Asn235, and Ser277. Dimethylallyl diphosphate contacts are provided by Ser233, Asn235, and Ser277. 3 residues coordinate isopentenyl diphosphate: Ser233, Asn235, and Ser277.

This sequence belongs to the IspH family. It depends on [4Fe-4S] cluster as a cofactor.

The catalysed reaction is isopentenyl diphosphate + 2 oxidized [2Fe-2S]-[ferredoxin] + H2O = (2E)-4-hydroxy-3-methylbut-2-enyl diphosphate + 2 reduced [2Fe-2S]-[ferredoxin] + 2 H(+). The enzyme catalyses dimethylallyl diphosphate + 2 oxidized [2Fe-2S]-[ferredoxin] + H2O = (2E)-4-hydroxy-3-methylbut-2-enyl diphosphate + 2 reduced [2Fe-2S]-[ferredoxin] + 2 H(+). It participates in isoprenoid biosynthesis; dimethylallyl diphosphate biosynthesis; dimethylallyl diphosphate from (2E)-4-hydroxy-3-methylbutenyl diphosphate: step 1/1. Its pathway is isoprenoid biosynthesis; isopentenyl diphosphate biosynthesis via DXP pathway; isopentenyl diphosphate from 1-deoxy-D-xylulose 5-phosphate: step 6/6. Its function is as follows. Catalyzes the conversion of 1-hydroxy-2-methyl-2-(E)-butenyl 4-diphosphate (HMBPP) into a mixture of isopentenyl diphosphate (IPP) and dimethylallyl diphosphate (DMAPP). Acts in the terminal step of the DOXP/MEP pathway for isoprenoid precursor biosynthesis. The protein is 4-hydroxy-3-methylbut-2-enyl diphosphate reductase of Malacoplasma penetrans (strain HF-2) (Mycoplasma penetrans).